An 817-amino-acid chain; its full sequence is MMKTEPRGPGGPLRSASPHRSAYEAGIQALKPPDAPGPDEAPKAAHHKKYGSNVHRIKSMFLQMGTTAGPPGEAGGGAGMAEAPRASDRGVRLSLPRASSLNENVDHSALLKLGTSVSERVSRFDSKPAPSAQPAPPPHPPSRLQETRKLFERSVPAASGGDKEAVARRLLRQERAGLQDRKLDVVVRFNGSTEALDKLDADAVSPTVSQLSAVFEKADSRTGLHRAPGPPRAAGAPQVNSKLVTKRSRVFQPPPPPPAPSGDGATEKERGPGGQQPPQHRVAPARPPPKPREVRKIKPVEVEESGESEAESAPGEVIQAEVTVHAALENGSTPATTASPAPEEPKAEAVPEEEAAASVATLERGVDNGRAPDMAPEEVDESKKEDFSEADLVDVSAYSGLGEDSGGSALEEDDEEDEEDGEPPYEPESGCVEIPGLSEEEDPAPSRKIHFSTAPIQVFSTYSNEDYDRRNEDVDPMAASAEYELEKRVERLELFPVELEKDSEGLGISIIGMGAGADMGLEKLGIFVKTVTEGGAAHRDGRIQVNDLLVEVDGTSLVGVTQSFAASVLRNTKGRVRFMIGRERPGEQSEVAQLIQQTLEQERWQREMMEQRYAQYGEDDEETGEYATDEDEELSPTFPGGEMAIEVFELAENEDALSPVEMEPEKLVHKFKELQIKHAVTEAEIQQLKRKLQSLEQEKGRWRVEKAQLEQSVEENKERMEKLEGYWGEAQSLCQAVDEHLRETQAQYQALERKYSKAKRLIKDYQQKEIEFLKKETAQRRVLEESELARKEEMDKLLDKISELEGNLQTLRNSNST.

Disordered stretches follow at residues 1-52 (MMKT…KYGS) and 64-163 (MGTT…GGDK). Actin-binding regions lie at residues 1-154 (MMKT…FERS) and 164-282 (EAVA…QHRV). S15 is modified (phosphoserine; by MAPK1). Position 17 is a phosphoserine; by CDK5 (S17). The residue at position 94 (S94) is a Phosphoserine; by PKA. Phosphoserine is present on residues S100 and S116. The tract at residues 100–371 (SLNENVDHSA…LERGVDNGRA (272 aa)) is interaction with D(2) dopamine receptor. Positions 131-141 (SAQPAPPPHPP) are enriched in pro residues. The interval 169 to 255 (RLLRQERAGL…KRSRVFQPPP (87 aa)) is interaction with ADRA2A, ADRA2B and ADRA2C. S192 carries the post-translational modification Phosphoserine. Residue T193 is modified to Phosphothreonine. S205 carries the phosphoserine; by MAPK1 modification. Phosphothreonine is present on T207. Positions 216–451 (EKADSRTGLH…DPAPSRKIHF (236 aa)) are disordered. Over residues 290-301 (KPREVRKIKPVE) the composition is skewed to basic and acidic residues. Composition is skewed to low complexity over residues 332 to 341 (STPATTASPA) and 399 to 409 (SGLGEDSGGSA). A compositionally biased stretch (acidic residues) spans 410–425 (LEEDDEEDEEDGEPPY). The tract at residues 417–494 (DEEDGEPPYE…LEKRVERLEL (78 aa)) is interaction with protein phosphatase 1. S438 carries the post-translational modification Phosphoserine. A PP1-binding motif motif is present at residues 447-451 (RKIHF). Residues 480–525 (SAEYELEKRVERLELFPVELEKDSEGLGISIIGMGAGADMGLEKLG) form an interaction with RGS2 region. In terms of domain architecture, PDZ spans 496–584 (PVELEKDSEG…RVRFMIGRER (89 aa)). Residues 595-616 (IQQTLEQERWQREMMEQRYAQY) are a coiled coil. An interaction with TGN38 region spans residues 595–816 (IQQTLEQERW…NLQTLRNSNS (222 aa)). Residue S658 is modified to Phosphoserine. Positions 665 to 816 (EKLVHKFKEL…NLQTLRNSNS (152 aa)) form a coiled coil.

Possibly exists as a homodimer, homotrimer or a homotetramer. Interacts with F-actin, PPP1CA, neurabin-1, TGN38 and D(2) dopamine receptor. Interacts with RGS1, RGS2, RGS4, RGS19 and ADRA1B, ADRA2A, ADRA2B, ADRA2C, CDKN2A, PPP1R2, RASGFR1 and TIAM1. Interacts (via C-terminus) with SPATA13 (via C-terminal tail). Interacts with DCLK2. Interacts with ADRA2B. In terms of processing, stimulation of D1 (but not D2) dopamine receptors induces Ser-94 phosphorylation. Dephosphorylation of Ser-94 is mediated mainly by PP1 and to a lesser extent by PP2A. Phosphorylation of spinophilin disrupts its association with F-actin, but does not affect its binding to PP1.

It localises to the cytoplasm. It is found in the cytoskeleton. The protein localises to the nucleus. Its subcellular location is the postsynaptic density. The protein resides in the cell junction. It localises to the adherens junction. It is found in the cell projection. The protein localises to the dendritic spine. Its subcellular location is the cell membrane. The protein resides in the lamellipodium. It localises to the filopodium. It is found in the ruffle membrane. Functionally, seems to act as a scaffold protein in multiple signaling pathways. Modulates excitatory synaptic transmission and dendritic spine morphology. Binds to actin filaments (F-actin) and shows cross-linking activity. Binds along the sides of the F-actin. May play an important role in linking the actin cytoskeleton to the plasma membrane at the synaptic junction. Believed to target protein phosphatase 1/PP1 to dendritic spines, which are rich in F-actin, and regulates its specificity toward ion channels and other substrates, such as AMPA-type and NMDA-type glutamate receptors. Plays a role in regulation of G-protein coupled receptor signaling, including dopamine D2 receptors and alpha-adrenergic receptors. May establish a signaling complex for dopaminergic neurotransmission through D2 receptors by linking receptors downstream signaling molecules and the actin cytoskeleton. Binds to ADRA1B and RGS2 and mediates regulation of ADRA1B signaling. May confer to Rac signaling specificity by binding to both, RacGEFs and Rac effector proteins. Probably regulates p70 S6 kinase activity by forming a complex with TIAM1. Required for hepatocyte growth factor (HGF)-induced cell migration. This Mus musculus (Mouse) protein is Neurabin-2 (Ppp1r9b).